An 86-amino-acid chain; its full sequence is Toxin Cn1 (86 aa).

The N-terminal stretch at 1 to 19 (MNSLLMITACFVLIGTVWA) is a signal peptide. Residues 20-84 (KDGYLVDAKG…TWPLPNKTCS (65 aa)) form the LCN-type CS-alpha/beta domain. Cystine bridges form between Cys30-Cys83, Cys34-Cys59, Cys43-Cys64, and Cys47-Cys66. The residue at position 84 (Ser84) is a Serine amide.

This sequence belongs to the long (4 C-C) scorpion toxin superfamily. Sodium channel inhibitor family. Beta subfamily. Expressed by the venom gland.

Its subcellular location is the secreted. Its function is as follows. Beta toxins bind voltage-independently at site-4 of sodium channels (Nav) and shift the voltage of activation toward more negative potentials thereby affecting sodium channel activation and promoting spontaneous and repetitive firing. This Centruroides noxius (Mexican scorpion) protein is Toxin Cn1.